The following is a 577-amino-acid chain: Arginine--tRNA ligase (577 aa).

The 'HIGH' region motif lies at 122–132 (PNVAKEMHVGH).

It belongs to the class-I aminoacyl-tRNA synthetase family. In terms of assembly, monomer.

The protein localises to the cytoplasm. The catalysed reaction is tRNA(Arg) + L-arginine + ATP = L-arginyl-tRNA(Arg) + AMP + diphosphate. In Aliivibrio fischeri (strain MJ11) (Vibrio fischeri), this protein is Arginine--tRNA ligase.